The primary structure comprises 323 residues: Probable cell division protein WhiA (323 aa).

The segment at residues 275 to 309 (TLKELGEMLTTGQVSKSGINHRLRKLDQIAERLRS) is a DNA-binding region (H-T-H motif).

The protein belongs to the WhiA family.

Involved in cell division and chromosome segregation. This Listeria innocua serovar 6a (strain ATCC BAA-680 / CLIP 11262) protein is Probable cell division protein WhiA.